We begin with the raw amino-acid sequence, 154 residues long: Ribonuclease HI (154 aa).

The 142-residue stretch at 1 to 142 (MTKHVEIFTD…CDELARTAAE (142 aa)) folds into the RNase H type-1 domain. Asp-10, Glu-48, Asp-70, and Asp-134 together coordinate Mg(2+).

Belongs to the RNase H family. As to quaternary structure, monomer. Mg(2+) serves as cofactor.

The protein localises to the cytoplasm. It catalyses the reaction Endonucleolytic cleavage to 5'-phosphomonoester.. Its function is as follows. Endonuclease that specifically degrades the RNA of RNA-DNA hybrids. This chain is Ribonuclease HI, found in Vibrio parahaemolyticus serotype O3:K6 (strain RIMD 2210633).